A 364-amino-acid polypeptide reads, in one-letter code: Phosphoserine aminotransferase (364 aa).

R41 is an L-glutamate binding site. Pyridoxal 5'-phosphate is bound by residues 75–76 (AS), W100, T155, and Q198. K199 carries the post-translational modification N6-(pyridoxal phosphate)lysine. 239–240 (NT) is a pyridoxal 5'-phosphate binding site.

Belongs to the class-V pyridoxal-phosphate-dependent aminotransferase family. SerC subfamily. As to quaternary structure, homodimer. Requires pyridoxal 5'-phosphate as cofactor.

The protein resides in the cytoplasm. It carries out the reaction O-phospho-L-serine + 2-oxoglutarate = 3-phosphooxypyruvate + L-glutamate. The catalysed reaction is 4-(phosphooxy)-L-threonine + 2-oxoglutarate = (R)-3-hydroxy-2-oxo-4-phosphooxybutanoate + L-glutamate. Its pathway is amino-acid biosynthesis; L-serine biosynthesis; L-serine from 3-phospho-D-glycerate: step 2/3. Functionally, catalyzes the reversible conversion of 3-phosphohydroxypyruvate to phosphoserine and of 3-hydroxy-2-oxo-4-phosphonooxybutanoate to phosphohydroxythreonine. In Streptococcus thermophilus (strain ATCC BAA-250 / LMG 18311), this protein is Phosphoserine aminotransferase.